Consider the following 117-residue polypeptide: Immunoglobulin lambda variable 10-54 (117 aa).

A signal peptide spans 1–21 (MPWALLLLTLLTHSAVSVVQA). The segment at 20-43 (QAGLTQPPSVSKGLRQTATLTCTG) is framework-1. Residues 22-117 (GLTQPPSVSK…CSALDSSLSA (96 aa)) enclose the Ig-like domain. Cys41 and Cys108 form a disulfide bridge. Residues 44–52 (NSNIVGNQG) are complementarity-determining-1. Residues 53 to 69 (AAWLQQHQGHPPKLLSY) are framework-2. Residues 70 to 72 (RNN) are complementarity-determining-2. The tract at residues 73-108 (NRPSGISERFSASRSGNTASLTITGLQPEDEADYYC) is framework-3. Positions 109 to 117 (SALDSSLSA) are complementarity-determining-3.

As to quaternary structure, immunoglobulins are composed of two identical heavy chains and two identical light chains; disulfide-linked.

It localises to the secreted. Its subcellular location is the cell membrane. In terms of biological role, v region of the variable domain of immunoglobulin light chains that participates in the antigen recognition. Immunoglobulins, also known as antibodies, are membrane-bound or secreted glycoproteins produced by B lymphocytes. In the recognition phase of humoral immunity, the membrane-bound immunoglobulins serve as receptors which, upon binding of a specific antigen, trigger the clonal expansion and differentiation of B lymphocytes into immunoglobulins-secreting plasma cells. Secreted immunoglobulins mediate the effector phase of humoral immunity, which results in the elimination of bound antigens. The antigen binding site is formed by the variable domain of one heavy chain, together with that of its associated light chain. Thus, each immunoglobulin has two antigen binding sites with remarkable affinity for a particular antigen. The variable domains are assembled by a process called V-(D)-J rearrangement and can then be subjected to somatic hypermutations which, after exposure to antigen and selection, allow affinity maturation for a particular antigen. The sequence is that of Immunoglobulin lambda variable 10-54 from Homo sapiens (Human).